The primary structure comprises 244 residues: uncharacterized protein (244 aa).

The N-terminal stretch at 1 to 19 is a signal peptide; that stretch reads MRGIFFLILILNFIGLIFS. N45 and N77 each carry an N-linked (GlcNAc...) asparagine glycan. 2 consecutive ShKT domains span residues 67 to 105 and 113 to 149; these read CNNPQPDTTLNCTALAGECNSALFSELMKEKCPATCGKC and CSDKSKPDICVNLKTLCNSVEFYDKLSEQCPSTCNRC. 3 cysteine pairs are disulfide-bonded: C113–C149, C122–C142, and C129–C146. 2 N-linked (GlcNAc...) asparagine glycosylation sites follow: N152 and N158. 2 ShKT domains span residues 171-205 and 208-243; these read CTDLANDCSYNQNRCSVKEYSSLMHRLCPKTCNAC and CEDANKMCPIWVPRGFCSKFDHDKVQKSCAKSCNIC. 6 disulfides stabilise this stretch: C171-C205, C178-C198, C185-C202, C208-C243, C215-C236, and C224-C240.

This is an uncharacterized protein from Caenorhabditis elegans.